Here is a 675-residue protein sequence, read N- to C-terminus: DNA ligase (675 aa).

NAD(+) contacts are provided by residues 32-36, 81-82, and E113; these read DAEYD and SL. K115 acts as the N6-AMP-lysine intermediate in catalysis. NAD(+) contacts are provided by R136, E173, K291, and K315. C409, C412, C427, and C433 together coordinate Zn(2+). In terms of domain architecture, BRCT spans 595 to 675; sequence SEKTYFFNKK…ELNSLIRIKE (81 aa).

Belongs to the NAD-dependent DNA ligase family. LigA subfamily. The cofactor is Mg(2+). Mn(2+) is required as a cofactor.

It catalyses the reaction NAD(+) + (deoxyribonucleotide)n-3'-hydroxyl + 5'-phospho-(deoxyribonucleotide)m = (deoxyribonucleotide)n+m + AMP + beta-nicotinamide D-nucleotide.. In terms of biological role, DNA ligase that catalyzes the formation of phosphodiester linkages between 5'-phosphoryl and 3'-hydroxyl groups in double-stranded DNA using NAD as a coenzyme and as the energy source for the reaction. It is essential for DNA replication and repair of damaged DNA. The sequence is that of DNA ligase from Buchnera aphidicola subsp. Acyrthosiphon pisum (strain 5A).